A 311-amino-acid chain; its full sequence is Protoheme IX farnesyltransferase (311 aa).

The next 9 membrane-spanning stretches (helical) occupy residues 33–53, 55–75, 104–124, 127–147, 155–175, 181–201, 228–248, 252–272, and 287–307; these read VVMLMLLTSLIGMLLATPSPA, LWLLVLGNLGIGLCAGAAAAV, NALLFSALLGGVGLWILSSFI, LTAWLTLASLLGYAVIYTLFL, IVIGGLAGAAPPLLGWTAVTG, GLLLVLIIFAWTPPHFWALAL, IVLYTVILIAVTLLPFATRMM, YLVGALVLGAGFLYRALKLLV, and IIYLMALFVVMLVDHYLFPIP.

The protein belongs to the UbiA prenyltransferase family. Protoheme IX farnesyltransferase subfamily.

The protein localises to the cell inner membrane. It catalyses the reaction heme b + (2E,6E)-farnesyl diphosphate + H2O = Fe(II)-heme o + diphosphate. It functions in the pathway porphyrin-containing compound metabolism; heme O biosynthesis; heme O from protoheme: step 1/1. Its function is as follows. Converts heme B (protoheme IX) to heme O by substitution of the vinyl group on carbon 2 of heme B porphyrin ring with a hydroxyethyl farnesyl side group. The polypeptide is Protoheme IX farnesyltransferase (Teredinibacter turnerae (strain ATCC 39867 / T7901)).